Consider the following 70-residue polypeptide: Pyruvate-flavodoxin oxidoreductase (70 aa).

This sequence belongs to the pyruvate:ferredoxin/flavodoxin oxidoreductase family.

It carries out the reaction oxidized [flavodoxin] + pyruvate + CoA + 2 H(+) = reduced [flavodoxin] + acetyl-CoA + CO2. Oxidoreductase required for the transfer of electrons from pyruvate to flavodoxin, which reduces nitrogenase. This Anabaena variabilis protein is Pyruvate-flavodoxin oxidoreductase (nifJ).